Consider the following 720-residue polypeptide: MTVSFSMFQIYRLVWLSFMTSMCLSACIHDSVLQETPVVSSNIISSRVPRLFPRSTSSDYFQPLRVTPWYLLGENAFISQGQIRQLKIALQEVTQMLSSTLSVHRSEGSLLLNRDISRFCRSVWRAPNDNKCAYMQTSYQGEKCLDVTIPDFHLQGVKVWSDLEKEPRTVIEDGAGVPDTDFLLYVQVAQTQKCAAQPSVIAYASYCQQDPTGRPLAGVIVFCTDHLREEEYNQRHIIQVALHELLHTLGFSSSLYASWLDCSLAEYGEACSSRTRVTNTDENGQFRIYTPTVMQKMGEHLGVEGVGAPLENKGFPNLASSHWESRFFQGSIMTALLSPPHLTHLDPITLAAFTDMGWYKVNATIKSQLMWGKGAGRYFGLPTTCQDSSTGFFCTGSKLGCHHLHLDKGNCSTDSYLEGCHIYSPLIHGGECWRHQNSGDPDEIFHAQSRCFYSNLTKGASPNQEFRGRCYLHQCLGENHFQVKVHESEWTDCPAGAWIQVAGYEGFIQCPSGCLCLGFQTPHVATLTPTYVTGQITTVKENNVYPTEGIVQFRVQVEVSQRHKWTSEIKSFLLDEVLGVIAQKAGVQRCFLQSHMKEDLDLSFAIVGKWSTDCPPTPEADTAAFSLLTLNQDGAPYIIYNSSYFSTVSIRFIDSDPPALYVSHMLYSYVIGGGCCAVCGAAIIFALFWYKLRRQFLRVGSSYPPETSNHERPQIPADLV.

The first 25 residues, 1-25, serve as a signal peptide directing secretion; the sequence is MTVSFSMFQIYRLVWLSFMTSMCLS. At 26–668 the chain is on the extracellular side; sequence ACIHDSVLQE…ALYVSHMLYS (643 aa). Position 243 (His-243) interacts with Zn(2+). The active site involves Glu-244. Residues His-247 and His-322 each contribute to the Zn(2+) site. Residues 669 to 689 traverse the membrane as a helical segment; that stretch reads YVIGGGCCAVCGAAIIFALFW. The Cytoplasmic segment spans residues 690–720; the sequence is YKLRRQFLRVGSSYPPETSNHERPQIPADLV.

It belongs to the peptidase M8 family. The cofactor is Zn(2+).

The protein resides in the membrane. Putative metalloprotease playing a role in the process of LR patterning. This is Ciliated left-right organizer metallopeptidase (cirop) from Xenopus laevis (African clawed frog).